The primary structure comprises 191 residues: Transposon Tn1546 resolvase (191 aa).

The 137-residue stretch at 2 to 138 (RKIGYIRVSS…EGIELAKKEG (137 aa)) folds into the Resolvase/invertase-type recombinase catalytic domain. The active-site O-(5'-phospho-DNA)-serine intermediate is Ser-10. Residues 168–187 (VNQICEITNVSRASLYRKLS) constitute a DNA-binding region (H-T-H motif).

The protein belongs to the site-specific recombinase resolvase family.

In terms of biological role, resolvase catalyzes the resolution (a site-specific recombination) of the cointegrated replicon to yield the final transposition products. The chain is Transposon Tn1546 resolvase from Enterococcus faecium (Streptococcus faecium).